The chain runs to 117 residues: Large ribosomal subunit protein uL18 (117 aa).

It belongs to the universal ribosomal protein uL18 family. As to quaternary structure, part of the 50S ribosomal subunit; part of the 5S rRNA/L5/L18/L25 subcomplex. Contacts the 5S and 23S rRNAs.

This is one of the proteins that bind and probably mediate the attachment of the 5S RNA into the large ribosomal subunit, where it forms part of the central protuberance. The chain is Large ribosomal subunit protein uL18 from Thiobacillus denitrificans (strain ATCC 25259 / T1).